Here is a 503-residue protein sequence, read N- to C-terminus: Maturase K (503 aa).

The protein belongs to the intron maturase 2 family. MatK subfamily.

The protein resides in the plastid. It localises to the chloroplast. Its function is as follows. Usually encoded in the trnK tRNA gene intron. Probably assists in splicing its own and other chloroplast group II introns. This chain is Maturase K, found in Aethionema cordifolium (Lebanon stonecress).